The following is a 427-amino-acid chain: Indole diterpene prenyltransferase penD (427 aa).

Residue 77–78 participates in L-tryptophan binding; that stretch reads YV. 9 residues coordinate substrate: arginine 99, lysine 186, tyrosine 188, arginine 259, lysine 261, tyrosine 263, tyrosine 344, tyrosine 409, and tyrosine 413.

It belongs to the tryptophan dimethylallyltransferase family.

It participates in secondary metabolite biosynthesis. Its function is as follows. Indole diterpene prenyltransferase; part of the gene cluster that mediates the biosynthesis of the indole diterpenes penitrems. The geranylgeranyl diphosphate (GGPP) synthase penG catalyzes the first step in penitrem biosynthesis via conversion of farnesyl pyrophosphate and isopentyl pyrophosphate into geranylgeranyl pyrophosphate (GGPP). Condensation of indole-3-glycerol phosphate with GGPP by the prenyl transferase penC then forms 3-geranylgeranylindole (3-GGI). Epoxidation by the FAD-dependent monooxygenase penM leads to a epoxidized-GGI that is substrate of the terpene cyclase penB for cyclization to yield paspaline. Paspaline is subsequently converted to 13-desoxypaxilline by the cytochrome P450 monooxygenase penP, the latter being then converted to paxilline by the cytochrome P450 monooxygenase penQ. Paxilline is converted to beta-paxitriol via C-10 ketoreduction by the short-chain dehydrogenase PC-15 which can be monoprenylated at the C-20 by the indole diterpene prenyltransferase penD. A two-step elimination (acetylation and elimination) process performed by the O-acetyltransferase PC-16 and the P.simplicissimum ptmI-ortholog not yet identified in P.crustosum, leads to the production of the prenylated form of penijanthine. The FAD-linked oxidoreductase ptmO then converts the prenylated form of penijanthine into PC-M5 which is in turn transformed into PC-M4 by the aromatic dimethylallyltransferase PC-22. A series of oxidation steps involving 4 cytochrome P450 monooxygenases (PC-21, PC-05, PC-23, PC-20) and a FAD-dependent monooxygenase (PC-14) are required for the transformation of PC-M4 to penitrems A and E. Synthesis of these final products is proposed to proceed via penitrems D and C (PC-21, PC-05, PC-14) and penitrems B and F (PC-21, PC-05, PC-14, PC-23). The protein is Indole diterpene prenyltransferase penD of Penicillium crustosum (Blue mold fungus).